A 278-amino-acid polypeptide reads, in one-letter code: MDVRQSIHSAHAKTLDTQGLRNEFLVEKVFVADEYTMVYSHIDRIIVGGIMPITKTVSVGGEVGKQLGVSYFLERRELGVINIGGAGTITVDGQCYEIGHRDALYVGKGAKEVVFASIDTGTPAKFYYNCAPAHTTYPTKKVTPDEVSPVTLGDNLTSNRRTINKYFVPDVLETCQLSMGLTELAPGNLWNTMPCHTHERRMEVYFYFNMDDDACVFHMMGQPQETRHIVMHNEQAVISPSWSIHSGVGTKAYTFIWGMVGENQVFDDMDHVAVKDLR.

Residues His196, His198, Glu203, and His245 each contribute to the Zn(2+) site.

It belongs to the KduI family. In terms of assembly, homohexamer. It depends on Zn(2+) as a cofactor.

It catalyses the reaction 5-dehydro-4-deoxy-D-glucuronate = 3-deoxy-D-glycero-2,5-hexodiulosonate. It participates in glycan metabolism; pectin degradation; 2-dehydro-3-deoxy-D-gluconate from pectin: step 4/5. In terms of biological role, catalyzes the isomerization of 5-dehydro-4-deoxy-D-glucuronate to 3-deoxy-D-glycero-2,5-hexodiulosonate. This chain is 4-deoxy-L-threo-5-hexosulose-uronate ketol-isomerase, found in Escherichia coli (strain K12 / MC4100 / BW2952).